The chain runs to 442 residues: Galactose/N-acetylgalactosamine-binding lectin CEL-III (442 aa).

Positions 1–10 (MVSLVPCGFA) are cleaved as a propeptide — removed in mature form. Residue Gln-11 is modified to Pyrrolidone carboxylic acid. The segment at 11 to 304 (QVLCTNPLDI…DWEVPTATWN (294 aa)) is has hemagglutinating activity towards rabbit erythrocytes, but no hemolytic activity towards them. 3 disulfide bridges follow: Cys-14–Cys-59, Cys-31–Cys-48, and Cys-72–Cys-88. Residues Asp-19 and 33–36 (DIVG) contribute to the D-galactose site. Ricin B-type lectin domains follow at residues 28 to 102 (SKQC…RWRL) and 115 to 245 (EQVA…WSRP). Residues Asp-33, Ile-34, and Gly-36 each contribute to the Ca(2+) site. Residues Asn-42 and Ile-43 each contribute to the Mg(2+) site. Residue Asp-49 participates in D-galactose binding. Position 53 (Asp-53) interacts with Ca(2+). Mg(2+) contacts are provided by Asn-82 and Val-83. D-galactose-binding positions include Val-117 and 131 to 134 (DVEG). A disulfide bond links Cys-129 and Cys-146. Residues Asp-131, Val-132, and Gly-134 each coordinate Ca(2+). Ile-141 is a binding site for Mg(2+). 144–147 (YDCQ) serves as a coordination point for D-galactose. Positions 151, 178, 179, and 181 each coordinate Ca(2+). An intrachain disulfide couples Cys-176 to Cys-193. D-galactose is bound at residue 178 to 181 (DVEG). The Mg(2+) site is built by Asn-187 and Val-188. 191-194 (YSCE) is a binding site for D-galactose. The Ca(2+) site is built by Asp-198, Asp-219, Val-220, and Gly-222. A disulfide bond links Cys-217 and Cys-234. Residue 219 to 222 (DVEG) participates in D-galactose binding. Asn-228 and Val-229 together coordinate Mg(2+). 232–235 (YRCD) lines the D-galactose pocket. Asp-239 contacts Ca(2+). Cystine bridges form between Cys-249/Cys-254 and Cys-264/Cys-281. The Ricin B-type lectin 3 domain occupies 261 to 293 (SNKCLDVSGDQGTGDVGTWQCDGLPDQRFKWVF). Ca(2+) contacts are provided by Asp-266, Val-267, and Gly-269. Residue 266-269 (DVSG) coordinates D-galactose. Mg(2+) is bound by residues Asp-275 and Val-276. Residues 279–282 (WQCD) and Asp-286 each bind D-galactose. Residue Asp-286 coordinates Ca(2+). Positions 294-442 (DDWEVPTATW…NEDCTFCTDI (149 aa)) are has a strong tendency to self-associate leading to formation of oligomers. 4 disulfides stabilise this stretch: Cys-308-Cys-390, Cys-377-Cys-416, Cys-425-Cys-439, and Cys-431-Cys-436.

As to quaternary structure, oligomerizes in the human and rabbit erythrocyte membranes. Oligomerization is induced by binding of beta-1,4-linked disaccharide ligands such as lactose, lactulose, N-acetyllactosamine and phenyl-beta-D-galactoside, but only a little by N-acetylgalactosamine and galactose, and not at all by melibiose in aqueous solution in the presence of high salt concentration and pH 10. Forms heptamers that assemble into larger 21mer oligomers, which may be inserted as a transmembrane pore to the erythrocyte membrane. Requires Ca(2+) as cofactor. The cofactor is Mg(2+). As to expression, expressed in body fluid (at protein level).

It is found in the secreted. With respect to regulation, ca(2+) is required for hemolytic activity and the activity increases with increasing calcium concentration. Hemolytic activity is inhibited by N-acetylgalactosamine (GalNAc), lactose, lactulose, galactosamine, dextran with molecular masses greater than 4 kDa, to a lesser extent by inulin and only slightly by sucrose and melezitose, but not by glucose or mannose. The activity is abolished in the presence of 10 mM EDTA. Lactose-binding increases with increasing calcium concentration, but calcium has no effect on hemagglutinating activity. Cytotoxic effect on Madin-Darby canine kidney (MDCK) cell line is strongly inhibited by galactose, lactose and N-acetylgalactosamine (GalNAc), but not by raffinose, N-acetylglucosamine (GlcNAc), glucose, mannose, ribose or sucrose. Pore formation in artificial lactosyl ceramide (LacCer) or globotetraosylceramide (Gb4Cer) containing liposomes is strongly inhibited by lactose. Functionally, galactose/N-acetylgalactosamine (Gal/GalNAc)-binding lectin with hemolytic activity. Favors saccharides that have a beta-1,4 linkage at the non-reducing end rather than saccharides having alpha-1,6 or alpha-1,4 linkages. Binds lactose, lactulose, GalNAc, galactosamine, methyl alpha-galactopyranoside, methyl beta-galactopyranoside, N-acetyllactosamine, p-nitrophenyl beta-D-galactopyranoside (pNP-Gal), p-nitrophenyl N-acetyl-beta-D-galactosaminide (pNP-GalNAc), asialofetuin, and human erythrocyte membrane lipids lactosyl ceramide (LacCer) and globoside globotetraosylceramide (Gb4Cer). Binds moderately to galactose, melibiose, raffinose, fucose, methyl alpha-galactoside and methyl beta-galactoside. Binds weakly to glucose, mannose and N-acetylglucosamine (GlcNAc). Has hemolytic activity towards human (A, B and O-type), rabbit and rat erythrocytes, but not towards mouse, chicken or horse erythrocytes. Forms ion-permeable transmembrane pores in the erythrocyte membrane as well as in artificial liposomes containing human erythrocyte membrane lipids LacCer, Gb4Cer and galactosyl ceramide (GalCer) leading to destruction of the membrane. Has hemagglutinating activity towards rabbit, human and rat erythrocytes, and at relatively high concentrations towards chicken and horse erythrocytes, but not towards mouse erythrocytes. Has dose-dependent cytotoxic effect on Madin-Darby canine kidney (MDCK), African green monkey kidney (Vero) and human epithelia carcinoma (HeLa) cell lines, but Chinese hamster ovary (CHO), rat sarcoma (XC) and potoroo rat kangaroo kidney (PtK1) cells are highly resistant to the cytotoxic effect of this protein. Impairs malaria parasite development in malaria parasite infected transgenic A.stephensi mosquitoes expressing this protein specifically in their midguts. Binds to ookinetes and leads to strong dose-dependent inhibition of ookinete formation in vitro. Leads to severely impaired oocyst formation and significantly reduced sporozoite production of rodent malaria parasite P.berghei in the salivary glands of the transgenic mosquitoes. The parasite transmission to uninfected mice (vectorial competence) of these mosquitoes is significantly impaired. Also leads to severely impaired oocyst formation of human malaria parasite P.falciparum in transgenic mosquitoes fed on mature P.falciparum gametocyte cultures. May be involved in defense mechanisms acting as a toxic protein to foreign microorganisms. May act in defense against predators. This Pseudocnus echinatus (Sea cucumber) protein is Galactose/N-acetylgalactosamine-binding lectin CEL-III.